We begin with the raw amino-acid sequence, 188 residues long: Large ribosomal subunit protein bL35m (188 aa).

The protein belongs to the bacterial ribosomal protein bL35 family. Component of the mitochondrial large ribosomal subunit (mt-LSU). Mature mammalian 55S mitochondrial ribosomes consist of a small (28S) and a large (39S) subunit. The 28S small subunit contains a 12S ribosomal RNA (12S mt-rRNA) and 30 different proteins. The 39S large subunit contains a 16S rRNA (16S mt-rRNA), a copy of mitochondrial valine transfer RNA (mt-tRNA(Val)), which plays an integral structural role, and 52 different proteins.

It localises to the mitochondrion. This Homo sapiens (Human) protein is Large ribosomal subunit protein bL35m (MRPL35).